The primary structure comprises 543 residues: Vibriobactin-specific 2,3-dihydroxybenzoate-AMP ligase (543 aa).

The helical transmembrane segment at 240–259 (FPLSSPGALGVFWAGGCVVL) threads the bilayer.

The protein belongs to the ATP-dependent AMP-binding enzyme family.

Its subcellular location is the cell inner membrane. It catalyses the reaction 2,3-dihydroxybenzoate + holo-[ACP] + ATP = 2,3-dihydroxybenzoyl-[ACP] + AMP + diphosphate. Its pathway is siderophore biosynthesis; vibriobactin biosynthesis. Activation of the carboxylate group of 2,3-dihydroxy-benzoate (DHB), via ATP-dependent PPi exchange reactions, to the acyladenylate, preparing that molecule for the final stages of vibriobactin synthesis. This is Vibriobactin-specific 2,3-dihydroxybenzoate-AMP ligase (vibE) from Vibrio cholerae serotype O1 (strain ATCC 39315 / El Tor Inaba N16961).